The sequence spans 237 residues: MEVIPAVDIKDGSCVRLKKGDFNKRRVYSTSPVDVALYWEKHGASRLHIVDLDGAKSGWPTHLKTIREIALRVNIPLQVGGGIRSLKVIKKYLDSGVDRIILGTVALKNPELVKRALDNFGSNRIVVGVDARGGKVATEGWLKTSQVTVEDIISEMEEVGVKTFIYTDINRDGMLKGPDIEGIKRVLKSTKARIIASGGISSRQDLINLKAIGIKAAIVGKALYEGNLPLEVLNQYP.

Residue aspartate 8 is the Proton acceptor of the active site. The active-site Proton donor is aspartate 130.

This sequence belongs to the HisA/HisF family.

It localises to the cytoplasm. The enzyme catalyses 1-(5-phospho-beta-D-ribosyl)-5-[(5-phospho-beta-D-ribosylamino)methylideneamino]imidazole-4-carboxamide = 5-[(5-phospho-1-deoxy-D-ribulos-1-ylimino)methylamino]-1-(5-phospho-beta-D-ribosyl)imidazole-4-carboxamide. The protein operates within amino-acid biosynthesis; L-histidine biosynthesis; L-histidine from 5-phospho-alpha-D-ribose 1-diphosphate: step 4/9. The chain is 1-(5-phosphoribosyl)-5-[(5-phosphoribosylamino)methylideneamino] imidazole-4-carboxamide isomerase from Halothermothrix orenii (strain H 168 / OCM 544 / DSM 9562).